We begin with the raw amino-acid sequence, 495 residues long: Maternal protein exuperantia-1 (495 aa).

2 disordered regions span residues 197-217 (DESA…SSND) and 377-495 (TIKP…AATN). Polar residues-rich tracts occupy residues 207 to 216 (ENVNRNGSSN) and 398 to 414 (AASS…TSTE).

Its function is as follows. Ensures the proper localization of the mRNA of the bicoid gene to the anterior regions of the oocyte thus playing a fundamental role in the establishment of the polarity of the oocyte. May bind the bcd mRNA. This chain is Maternal protein exuperantia-1 (exu1), found in Drosophila pseudoobscura pseudoobscura (Fruit fly).